Here is a 355-residue protein sequence, read N- to C-terminus: Protein RecA (355 aa).

67-74 contacts ATP; it reads GPESSGKT.

The protein belongs to the RecA family.

It is found in the cytoplasm. In terms of biological role, can catalyze the hydrolysis of ATP in the presence of single-stranded DNA, the ATP-dependent uptake of single-stranded DNA by duplex DNA, and the ATP-dependent hybridization of homologous single-stranded DNAs. It interacts with LexA causing its activation and leading to its autocatalytic cleavage. This Shewanella amazonensis (strain ATCC BAA-1098 / SB2B) protein is Protein RecA.